A 427-amino-acid polypeptide reads, in one-letter code: Serine--tRNA ligase (427 aa).

L-serine is bound at residue 235-237 (TAE). ATP is bound by residues 266-268 (RRE) and V282. E289 serves as a coordination point for L-serine. ATP is bound at residue 353-356 (EASS). S389 provides a ligand contact to L-serine.

The protein belongs to the class-II aminoacyl-tRNA synthetase family. Type-1 seryl-tRNA synthetase subfamily. Homodimer. The tRNA molecule binds across the dimer.

The protein localises to the cytoplasm. The enzyme catalyses tRNA(Ser) + L-serine + ATP = L-seryl-tRNA(Ser) + AMP + diphosphate + H(+). It carries out the reaction tRNA(Sec) + L-serine + ATP = L-seryl-tRNA(Sec) + AMP + diphosphate + H(+). Its pathway is aminoacyl-tRNA biosynthesis; selenocysteinyl-tRNA(Sec) biosynthesis; L-seryl-tRNA(Sec) from L-serine and tRNA(Sec): step 1/1. Its function is as follows. Catalyzes the attachment of serine to tRNA(Ser). Is also able to aminoacylate tRNA(Sec) with serine, to form the misacylated tRNA L-seryl-tRNA(Sec), which will be further converted into selenocysteinyl-tRNA(Sec). The chain is Serine--tRNA ligase from Chloroherpeton thalassium (strain ATCC 35110 / GB-78).